A 276-amino-acid chain; its full sequence is Putative pyridoxine kinase (276 aa).

Residue asparagine 139 coordinates ATP. Mg(2+) is bound at residue glutamate 142. ATP contacts are provided by residues 176 to 180 (KGGKA), aspartate 188, glycine 213, and lysine 238.

Belongs to the ThiD family.

It carries out the reaction pyridoxal + ATP = pyridoxal 5'-phosphate + ADP + H(+). Phosphorylates B6 vitamers; functions in a salvage pathway. Uses pyridoxal, pyridoxine, and pyridoxamine as substrates. This chain is Putative pyridoxine kinase (pdxK), found in Staphylococcus epidermidis (strain ATCC 12228 / FDA PCI 1200).